Here is a 376-residue protein sequence, read N- to C-terminus: Protein FhaE (376 aa).

The signal sequence occupies residues 1-37 (MSQIFADRRAAVPARVISFCGAALAVWAGLAVQPAMA).

The chain is Protein FhaE (fhaE) from Bordetella pertussis (strain Tohama I / ATCC BAA-589 / NCTC 13251).